A 568-amino-acid polypeptide reads, in one-letter code: Sulfite reductase [NADPH] hemoprotein beta-component (568 aa).

Positions 425, 431, 470, and 474 each coordinate [4Fe-4S] cluster. Cys474 provides a ligand contact to siroheme.

It belongs to the nitrite and sulfite reductase 4Fe-4S domain family. Alpha(8)-beta(8). The alpha component is a flavoprotein, the beta component is a hemoprotein. Siroheme is required as a cofactor. Requires [4Fe-4S] cluster as cofactor.

It carries out the reaction hydrogen sulfide + 3 NADP(+) + 3 H2O = sulfite + 3 NADPH + 4 H(+). The protein operates within sulfur metabolism; hydrogen sulfide biosynthesis; hydrogen sulfide from sulfite (NADPH route): step 1/1. Component of the sulfite reductase complex that catalyzes the 6-electron reduction of sulfite to sulfide. This is one of several activities required for the biosynthesis of L-cysteine from sulfate. This is Sulfite reductase [NADPH] hemoprotein beta-component from Xanthomonas campestris pv. campestris (strain B100).